The following is a 504-amino-acid chain: Maturase K (504 aa).

This sequence belongs to the intron maturase 2 family. MatK subfamily.

It is found in the plastid. The protein resides in the chloroplast. Usually encoded in the trnK tRNA gene intron. Probably assists in splicing its own and other chloroplast group II introns. In Fagus crenata (Japanese beech), this protein is Maturase K.